An 853-amino-acid chain; its full sequence is DNA mismatch repair protein MutS (853 aa).

614–621 contributes to the ATP binding site; sequence GPNMGGKS.

Belongs to the DNA mismatch repair MutS family.

Functionally, this protein is involved in the repair of mismatches in DNA. It is possible that it carries out the mismatch recognition step. This protein has a weak ATPase activity. The chain is DNA mismatch repair protein MutS from Escherichia fergusonii (strain ATCC 35469 / DSM 13698 / CCUG 18766 / IAM 14443 / JCM 21226 / LMG 7866 / NBRC 102419 / NCTC 12128 / CDC 0568-73).